Consider the following 146-residue polypeptide: ATP synthase epsilon chain (146 aa).

Belongs to the ATPase epsilon chain family. As to quaternary structure, F-type ATPases have 2 components, CF(1) - the catalytic core - and CF(0) - the membrane proton channel. CF(1) has five subunits: alpha(3), beta(3), gamma(1), delta(1), epsilon(1). CF(0) has three main subunits: a, b and c.

It localises to the cell inner membrane. In terms of biological role, produces ATP from ADP in the presence of a proton gradient across the membrane. The protein is ATP synthase epsilon chain of Rhodospirillum centenum (strain ATCC 51521 / SW).